The primary structure comprises 97 residues: MNNLPATPSPEELMTTPVFQAPETMSPQAEEASTALIAVVITVVFLTLLSVVTLIFFYLYKNKGSYVTYEPAEGEPSAILQMETDSAKGKEKEEYFI.

The Extracellular portion of the chain corresponds to 1–36 (MNNLPATPSPEELMTTPVFQAPETMSPQAEEASTAL). An O-linked (GalNAc...) threonine glycan is attached at Thr-7. Ser-9 is a glycosylation site (O-linked (GalNAc...) serine). O-linked (GalNAc...) threonine glycosylation is found at Thr-15, Thr-16, and Thr-24. O-linked (GalNAc...) serine glycosylation is present at Ser-26. The helical; Signal-anchor for type III membrane protein transmembrane segment at 37–57 (IAVVITVVFLTLLSVVTLIFF) threads the bilayer. The Cytoplasmic portion of the chain corresponds to 58 to 97 (YLYKNKGSYVTYEPAEGEPSAILQMETDSAKGKEKEEYFI).

It belongs to the SMAGP family. In terms of processing, O-glycosylated. The O-glycan is modified with sialic acid residues. In terms of tissue distribution, detected in brain (at protein level). Highly expressed in kidney and placenta. Detected in skin, breast, heart, lung, liver, prostate, spleen, small intestine, colon and stomach.

Its subcellular location is the cell membrane. The protein localises to the cytoplasmic vesicle membrane. Functionally, may play a role in epithelial cell-cell contacts. May play a role in tumor invasiveness and metastasis formation. The chain is Small cell adhesion glycoprotein (Smagp) from Rattus norvegicus (Rat).